Reading from the N-terminus, the 132-residue chain is Small ribosomal subunit protein uS8 (132 aa).

It belongs to the universal ribosomal protein uS8 family. In terms of assembly, part of the 30S ribosomal subunit. Contacts proteins S5 and S12.

Its function is as follows. One of the primary rRNA binding proteins, it binds directly to 16S rRNA central domain where it helps coordinate assembly of the platform of the 30S subunit. The protein is Small ribosomal subunit protein uS8 of Kineococcus radiotolerans (strain ATCC BAA-149 / DSM 14245 / SRS30216).